Here is a 221-residue protein sequence, read N- to C-terminus: Glutathione S-transferase A3 (221 aa).

At Ala-2 the chain carries N-acetylalanine. The 81-residue stretch at 3 to 83 (GKPVLHYFDG…YIASKYNLYG (81 aa)) folds into the GST N-terminal domain. The residue at position 4 (Lys-4) is an N6-succinyllysine. Glutathione is bound by residues Tyr-9, Arg-45, 54–55 (QV), and 67–68 (QT). Residues 85–207 (DMKERAIIDM…LQPGSQRKPF (123 aa)) enclose the GST C-terminal domain.

As to quaternary structure, homodimer.

It is found in the cytoplasm. The enzyme catalyses RX + glutathione = an S-substituted glutathione + a halide anion + H(+). It catalyses the reaction androst-5-ene-3,17-dione = androst-4-ene-3,17-dione. It carries out the reaction pregn-5-ene-3,20-dione = progesterone. Its function is as follows. Conjugation of reduced glutathione to a wide number of exogenous and endogenous hydrophobic electrophiles. Catalyzes isomerization reactions that contribute to the biosynthesis of steroid hormones. Efficiently catalyze obligatory double-bond isomerizations of delta(5)-androstene-3,17-dione and delta(5)-pregnene-3,20-dione, precursors to testosterone and progesterone, respectively. Has a high catalytic activity for aflatoxin B1-8,9 epoxide. The chain is Glutathione S-transferase A3 from Mus musculus (Mouse).